The primary structure comprises 108 residues: Insulin (108 aa).

The signal sequence occupies residues 1 to 24 (MALWMHLLPLLALLALWGPEPAPA). Cystine bridges form between C31–C94, C43–C107, and C93–C98. The propeptide at 57–85 (EAEDLQVGQVELGGGSITGSLPPLEGPMQ) is c peptide.

It belongs to the insulin family. As to quaternary structure, heterodimer of a B chain and an A chain linked by two disulfide bonds.

It localises to the secreted. In terms of biological role, insulin decreases blood glucose concentration. It increases cell permeability to monosaccharides, amino acids and fatty acids. It accelerates glycolysis, the pentose phosphate cycle, and glycogen synthesis in liver. The sequence is that of Insulin (INS) from Aotus trivirgatus (Three-striped night monkey).